A 657-amino-acid chain; its full sequence is Transketolase (657 aa).

Histidine 31 serves as a coordination point for substrate. Residues histidine 71 and 120 to 122 contribute to the thiamine diphosphate site; that span reads GPL. A Mg(2+)-binding site is contributed by aspartate 158. 2 residues coordinate thiamine diphosphate: glycine 159 and asparagine 188. Positions 188 and 190 each coordinate Mg(2+). Histidine 262, arginine 354, and serine 381 together coordinate substrate. Thiamine diphosphate is bound at residue histidine 262. The Proton donor role is filled by glutamate 408. Phenylalanine 434 contacts thiamine diphosphate. Histidine 458, aspartate 466, and arginine 517 together coordinate substrate.

It belongs to the transketolase family. Homodimer. Requires Mg(2+) as cofactor. The cofactor is Ca(2+). Mn(2+) serves as cofactor. It depends on Co(2+) as a cofactor. Thiamine diphosphate is required as a cofactor.

It catalyses the reaction D-sedoheptulose 7-phosphate + D-glyceraldehyde 3-phosphate = aldehydo-D-ribose 5-phosphate + D-xylulose 5-phosphate. It participates in carbohydrate biosynthesis; Calvin cycle. Its pathway is carbohydrate degradation; pentose phosphate pathway. In terms of biological role, catalyzes the transfer of a two-carbon ketol group from a ketose donor to an aldose acceptor, via a covalent intermediate with the cofactor thiamine pyrophosphate. The polypeptide is Transketolase (tklB) (Cereibacter sphaeroides (Rhodobacter sphaeroides)).